The following is a 208-amino-acid chain: Cytochrome c biogenesis ATP-binding export protein CcmA (208 aa).

Residues 3-206 (LSGKDLTAYR…LEKFLPPQEK (204 aa)) form the ABC transporter domain. Position 35–42 (35–42 (GPNGIGKS)) interacts with ATP.

The protein belongs to the ABC transporter superfamily. CcmA exporter (TC 3.A.1.107) family. As to quaternary structure, the complex is composed of two ATP-binding proteins (CcmA) and two transmembrane proteins (CcmB).

It is found in the cell inner membrane. It carries out the reaction heme b(in) + ATP + H2O = heme b(out) + ADP + phosphate + H(+). In terms of biological role, part of the ABC transporter complex CcmAB involved in the biogenesis of c-type cytochromes; once thought to export heme, this seems not to be the case, but its exact role is uncertain. Responsible for energy coupling to the transport system. The chain is Cytochrome c biogenesis ATP-binding export protein CcmA from Bartonella henselae (strain ATCC 49882 / DSM 28221 / CCUG 30454 / Houston 1) (Rochalimaea henselae).